Here is a 69-residue protein sequence, read N- to C-terminus: MIRKFLIVLIIAYQRYISPFTAPSCRFYPSCSEYARQSLIKYGLIKGVVKTCGRLCRCHPFHPGGYDPV.

Belongs to the UPF0161 family.

It is found in the cell inner membrane. Functionally, could be involved in insertion of integral membrane proteins into the membrane. The chain is Putative membrane protein insertion efficiency factor from Syntrophotalea carbinolica (strain DSM 2380 / NBRC 103641 / GraBd1) (Pelobacter carbinolicus).